The chain runs to 249 residues: tRNA (guanine-N(1)-)-methyltransferase (249 aa).

Residues glycine 113 and isoleucine 133–valine 138 each bind S-adenosyl-L-methionine.

This sequence belongs to the RNA methyltransferase TrmD family. As to quaternary structure, homodimer.

It is found in the cytoplasm. It carries out the reaction guanosine(37) in tRNA + S-adenosyl-L-methionine = N(1)-methylguanosine(37) in tRNA + S-adenosyl-L-homocysteine + H(+). Specifically methylates guanosine-37 in various tRNAs. The chain is tRNA (guanine-N(1)-)-methyltransferase from Neisseria gonorrhoeae (strain ATCC 700825 / FA 1090).